We begin with the raw amino-acid sequence, 360 residues long: UDP-3-O-acylglucosamine N-acyltransferase (360 aa).

Residue histidine 256 is the Proton acceptor of the active site. Positions 341 to 360 (EGSGAETAARPDDDRDEGRG) are disordered. A compositionally biased stretch (basic and acidic residues) spans 349 to 360 (ARPDDDRDEGRG).

The protein belongs to the transferase hexapeptide repeat family. LpxD subfamily. As to quaternary structure, homotrimer.

The catalysed reaction is a UDP-3-O-[(3R)-3-hydroxyacyl]-alpha-D-glucosamine + a (3R)-hydroxyacyl-[ACP] = a UDP-2-N,3-O-bis[(3R)-3-hydroxyacyl]-alpha-D-glucosamine + holo-[ACP] + H(+). It functions in the pathway bacterial outer membrane biogenesis; LPS lipid A biosynthesis. Functionally, catalyzes the N-acylation of UDP-3-O-acylglucosamine using 3-hydroxyacyl-ACP as the acyl donor. Is involved in the biosynthesis of lipid A, a phosphorylated glycolipid that anchors the lipopolysaccharide to the outer membrane of the cell. The protein is UDP-3-O-acylglucosamine N-acyltransferase of Rhodopseudomonas palustris (strain ATCC BAA-98 / CGA009).